Reading from the N-terminus, the 453-residue chain is Acyl-coenzyme A thioesterase 2, mitochondrial (453 aa).

The N-terminal 42 residues, 1–42 (MVASSFAVLRASRLCQWGWKSWTQLSGPPPLSTGGRTTFART), are a transit peptide targeting the mitochondrion. K83 carries the N6-acetyllysine modification. Active-site charge relay system residues include S273, D365, and H399. K447 is subject to N6-succinyllysine.

It belongs to the C/M/P thioester hydrolase family. Monomer. Post-translationally, the N-terminus is blocked. Constitutively expressed in heart and brown fat. Strongly induced in liver, and weakly in kidney, in peroxisome proliferator treated rat.

It localises to the mitochondrion matrix. The catalysed reaction is hexadecanoyl-CoA + H2O = hexadecanoate + CoA + H(+). It carries out the reaction tetradecanoyl-CoA + H2O = tetradecanoate + CoA + H(+). The enzyme catalyses octadecanoyl-CoA + H2O = octadecanoate + CoA + H(+). It catalyses the reaction eicosanoyl-CoA + H2O = eicosanoate + CoA + H(+). The catalysed reaction is decanoyl-CoA + H2O = decanoate + CoA + H(+). It carries out the reaction dodecanoyl-CoA + H2O = dodecanoate + CoA + H(+). The enzyme catalyses (9Z)-octadecenoyl-CoA + H2O = (9Z)-octadecenoate + CoA + H(+). It catalyses the reaction (9Z)-hexadecenoyl-CoA + H2O = (9Z)-hexadecenoate + CoA + H(+). The catalysed reaction is (9E)-octadecenoyl-CoA + H2O = (9E)-octadecenoate + CoA + H(+). It carries out the reaction (9Z,12Z)-octadecadienoyl-CoA + H2O = (9Z,12Z)-octadecadienoate + CoA + H(+). Its pathway is lipid metabolism; fatty acid metabolism. Its function is as follows. Catalyzes the hydrolysis of acyl-CoAs into free fatty acids and coenzyme A (CoASH), regulating their respective intracellular levels. Displays higher activity toward long chain acyl CoAs (C14-C20). The enzyme is involved in enhancing the hepatic fatty acid oxidation in mitochondria. The chain is Acyl-coenzyme A thioesterase 2, mitochondrial (Acot2) from Rattus norvegicus (Rat).